A 231-amino-acid chain; its full sequence is Octanoyltransferase (231 aa).

Positions 49 to 224 (ADTPDEIWLL…ALQRLLPPVY (176 aa)) constitute a BPL/LPL catalytic domain. Substrate-binding positions include 88–95 (RGGQITYH), 155–157 (ALG), and 168–170 (GLA). The active-site Acyl-thioester intermediate is the cysteine 186.

The protein belongs to the LipB family.

The protein localises to the cytoplasm. It carries out the reaction octanoyl-[ACP] + L-lysyl-[protein] = N(6)-octanoyl-L-lysyl-[protein] + holo-[ACP] + H(+). It participates in protein modification; protein lipoylation via endogenous pathway; protein N(6)-(lipoyl)lysine from octanoyl-[acyl-carrier-protein]: step 1/2. Its function is as follows. Catalyzes the transfer of endogenously produced octanoic acid from octanoyl-acyl-carrier-protein onto the lipoyl domains of lipoate-dependent enzymes. Lipoyl-ACP can also act as a substrate although octanoyl-ACP is likely to be the physiological substrate. The polypeptide is Octanoyltransferase (Aromatoleum aromaticum (strain DSM 19018 / LMG 30748 / EbN1) (Azoarcus sp. (strain EbN1))).